The following is a 117-amino-acid chain: Cell division protein FtsB (117 aa).

Residues 1-6 lie on the Cytoplasmic side of the membrane; that stretch reads MRDWRW. The helical transmembrane segment at 7-24 threads the bilayer; that stretch reads MLLVLALLLGWLQYRFWF. Residues 25–117 lie on the Periplasmic side of the membrane; the sequence is GPGNSGEVMM…QVGEHPADVP (93 aa). A coiled-coil region spans residues 29–69; the sequence is SGEVMMLEAQVTNQERDNEGLQQRNDALAAEVKDLKEGQSA.

This sequence belongs to the FtsB family. Part of a complex composed of FtsB, FtsL and FtsQ.

It localises to the cell inner membrane. Essential cell division protein. May link together the upstream cell division proteins, which are predominantly cytoplasmic, with the downstream cell division proteins, which are predominantly periplasmic. This is Cell division protein FtsB from Stenotrophomonas maltophilia (strain R551-3).